We begin with the raw amino-acid sequence, 862 residues long: MAERGRLGLPGAPGALNTPVPMNLFATWEVDGSSPSCVPRLCSLTLKKLAVLRELEKELLSVVIAVKMQYPHFLKREGNKLQIMLQRRKRYKNRTILGYKTLAAGSINMAEVMQHPSEGGQVLSLCSSIKEASVKVAEIWIVSLSSQPIDHEDSAMQAGPKTKSTDNYSEEEYESFSSEQEASDDAVQGQDLDEDDFDVGKPKKQRRSIVRTTSMTRQQNFKQKVVALLRRFKVSEEVLDSEQDPAEHVPEVEEDLDLLYDTLDVENPSDSGPDMDDDDSVLSTPKPKLRPYFEGLSHSSSQTEIGSIHSARSHREPPSPADVPEKTRSLGGKQQLSDSVSDTVALSAAVPREPSGQPEDSPEAETSTLDVFTEKLPPSGRIIKTESLVIPSTRSESKPAGRRGRSTSLKERQPARPQNERANSLDNERCPDTRSQLQIPRKTVYDQLNHILISDDQLPENIILVNTSDWQGQFLSDVLQKHTLPVVCTCSAADVQAAFSTIVSRIQRYCNCNSQPPTPVKIAVAGAQHYLSAILRLFVEQLSHKTPDWLGYMRFLIIPLGSHPVARYLGSVDYRYNNFFQDLAWRDLFNKLEAQSSVQDTPDIVSRITQYISGANCAHQLPIAEAMLTYKQKSPDEESSQRFIPFVGVVKVGIVEPSSATSGDSDDAAPSSSSILSSTPPSASTSPAAKEASPTPPSSPSVSGGLSSPSQGVGAELMGLQVDYWTAAQPADRKRDAEKKDMPTTKNTLKCTFRSLQVSRLPSSGEAAATPTMSMTVVTKEKNKKVMFLPKKTKDKEVESKSQCIEGISRLICTAKHQQNMLRVLIDGVECSDVKFFQLAAQWSSHVKHFPICIFGHSKATF.

3 disordered regions span residues 151-215 (HEDS…TTSM), 263-436 (LDVE…TRSQ), and 658-713 (SSAT…SQGV). Residues 263–272 (LDVENPSDSG) are compositionally biased toward low complexity. Basic and acidic residues predominate over residues 313–328 (SHREPPSPADVPEKTR). Polar residues predominate over residues 332–344 (GKQQLSDSVSDTV). 5 positions are modified to phosphoserine: Ser361, Ser387, Ser424, Ser662, and Ser665. Composition is skewed to low complexity over residues 658-693 (SSAT…KEAS) and 700-710 (PSVSGGLSSPS).

It belongs to the PACS family. As to quaternary structure, interacts with BID and PKD2. Interacts with SIRT1. Interacts with HDAC1. Interacts with TRPV1. Interacts with WDR37.

Its subcellular location is the endoplasmic reticulum. It localises to the mitochondrion. Functionally, multifunctional sorting protein that controls the endoplasmic reticulum (ER)-mitochondria communication, including the apposition of mitochondria with the ER and ER homeostasis. In addition, in response to apoptotic inducer, translocates BIB to mitochondria, which initiates a sequence of events including the formation of mitochondrial truncated BID, the release of cytochrome c, the activation of caspase-3 thereby causing cell death. May also involved in ion channel trafficking, directing acidic cluster-containing ion channels to distinct subcellular compartments. The protein is Phosphofurin acidic cluster sorting protein 2 (Pacs2) of Mus musculus (Mouse).